The chain runs to 121 residues: Alpha-endosulfine (121 aa).

The disordered stretch occupies residues 1-53; it reads MSQKQEEENPAEETGEEKQDTQEKEGILPEKAEEAKLKAKYPSLGQKPGGSDF. Residue S2 is modified to N-acetylserine. Phosphoserine is present on S2. The span at 16–37 shows a compositional bias: basic and acidic residues; sequence EEKQDTQEKEGILPEKAEEAKL. At T21 the chain carries Phosphothreonine. S43 bears the Phosphoserine mark. S67 bears the Phosphoserine; by GWL mark. A disordered region spans residues 79–121; it reads NKQLPSAGPDKNLVTGDHIPTPQDLPQRKSSLVTSKLAGGQVE. S109 carries the phosphoserine; by PKA modification.

This sequence belongs to the endosulfine family. Interacts (when phosphorylated at Ser-67) with PPP2R2D. Interacts with ABCC8. Interacts with SNCA; interaction is disrupted when phosphorylated at Ser-109. Post-translationally, phosphorylation at Ser-67 by GWL during mitosis is essential for interaction with PPP2R2D (PR55-delta) and subsequent inactivation of PP2A. Phosphorylated by PKA.

Its subcellular location is the cytoplasm. Protein phosphatase inhibitor that specifically inhibits protein phosphatase 2A (PP2A) during mitosis. When phosphorylated at Ser-67 during mitosis, specifically interacts with PPP2R2D (PR55-delta) and inhibits its activity, leading to inactivation of PP2A, an essential condition to keep cyclin-B1-CDK1 activity high during M phase. Also acts as a stimulator of insulin secretion by interacting with sulfonylurea receptor (ABCC8), thereby preventing sulfonylurea from binding to its receptor and reducing K(ATP) channel currents. In Bos taurus (Bovine), this protein is Alpha-endosulfine (ENSA).